The following is a 431-amino-acid chain: Forkhead box protein N2 (431 aa).

Positions 112-208 form a DNA-binding region, fork-head; the sequence is KPPYSFSLLI…QALKKQPFSS (97 aa). The segment at 364–387 is disordered; that stretch reads DSGYASQPCAKISEKGQSGKKMRK.

The protein resides in the nucleus. Its function is as follows. Binds to the purine-rich region in HTLV-I LTR. This is Forkhead box protein N2 (FOXN2) from Homo sapiens (Human).